The sequence spans 286 residues: Formamidopyrimidine-DNA glycosylase (286 aa).

Catalysis depends on proline 2, which acts as the Schiff-base intermediate with DNA. Residue glutamate 3 is the Proton donor of the active site. The Proton donor; for beta-elimination activity role is filled by lysine 61. Residues histidine 103, arginine 122, and arginine 164 each coordinate DNA. Residues 250 to 284 (NAYGQTGEPCGRCGTQIVRENFMNRGSHYCPNCQK) form an FPG-type zinc finger. Catalysis depends on arginine 274, which acts as the Proton donor; for delta-elimination activity.

The protein belongs to the FPG family. As to quaternary structure, monomer. Requires Zn(2+) as cofactor.

It carries out the reaction Hydrolysis of DNA containing ring-opened 7-methylguanine residues, releasing 2,6-diamino-4-hydroxy-5-(N-methyl)formamidopyrimidine.. It catalyses the reaction 2'-deoxyribonucleotide-(2'-deoxyribose 5'-phosphate)-2'-deoxyribonucleotide-DNA = a 3'-end 2'-deoxyribonucleotide-(2,3-dehydro-2,3-deoxyribose 5'-phosphate)-DNA + a 5'-end 5'-phospho-2'-deoxyribonucleoside-DNA + H(+). Involved in base excision repair of DNA damaged by oxidation or by mutagenic agents. Acts as a DNA glycosylase that recognizes and removes damaged bases. Has a preference for oxidized purines, such as 7,8-dihydro-8-oxoguanine (8-oxoG). Has AP (apurinic/apyrimidinic) lyase activity and introduces nicks in the DNA strand. Cleaves the DNA backbone by beta-delta elimination to generate a single-strand break at the site of the removed base with both 3'- and 5'-phosphates. The protein is Formamidopyrimidine-DNA glycosylase of Corynebacterium glutamicum (strain R).